The following is a 193-amino-acid chain: ATP-dependent Clp protease proteolytic subunit 2 (193 aa).

Ser98 acts as the Nucleophile in catalysis. The active site involves His123.

It belongs to the peptidase S14 family. In terms of assembly, fourteen ClpP subunits assemble into 2 heptameric rings which stack back to back to give a disk-like structure with a central cavity, resembling the structure of eukaryotic proteasomes.

The protein localises to the cytoplasm. It carries out the reaction Hydrolysis of proteins to small peptides in the presence of ATP and magnesium. alpha-casein is the usual test substrate. In the absence of ATP, only oligopeptides shorter than five residues are hydrolyzed (such as succinyl-Leu-Tyr-|-NHMec, and Leu-Tyr-Leu-|-Tyr-Trp, in which cleavage of the -Tyr-|-Leu- and -Tyr-|-Trp bonds also occurs).. Its function is as follows. Cleaves peptides in various proteins in a process that requires ATP hydrolysis. Has a chymotrypsin-like activity. Plays a major role in the degradation of misfolded proteins. In Bacillus cereus (strain ATCC 10987 / NRS 248), this protein is ATP-dependent Clp protease proteolytic subunit 2.